The primary structure comprises 61 residues: Small ribosomal subunit protein uS14 (61 aa).

Residues C24, C27, C40, and C43 each coordinate Zn(2+).

It belongs to the universal ribosomal protein uS14 family. Zinc-binding uS14 subfamily. Part of the 30S ribosomal subunit. Contacts proteins S3 and S10. Requires Zn(2+) as cofactor.

Functionally, binds 16S rRNA, required for the assembly of 30S particles and may also be responsible for determining the conformation of the 16S rRNA at the A site. The sequence is that of Small ribosomal subunit protein uS14 from Symbiobacterium thermophilum (strain DSM 24528 / JCM 14929 / IAM 14863 / T).